The following is a 379-amino-acid chain: Sialidase-2 (379 aa).

Residues 20–23 carry the FRIP motif motif; the sequence is YRIP. Substrate-binding residues include arginine 21 and arginine 41. The active-site Proton acceptor is the aspartate 46. Residues 127–138 form a BNR 1 repeat; it reads VSSTDHGRTWSP. Substrate contacts are provided by tyrosine 179 and tyrosine 181. The stretch at 197–208 is one BNR 2 repeat; the sequence is FISLDHGHTWKL. Substrate contacts are provided by glutamate 218, arginine 237, and arginine 303. Residue arginine 303 is part of the active site. The active-site Nucleophile is tyrosine 333. Glutamate 354 is an active-site residue.

The protein belongs to the glycosyl hydrolase 33 family. Highly expressed in heart.

The protein localises to the cytoplasm. Its subcellular location is the cytosol. It carries out the reaction Hydrolysis of alpha-(2-&gt;3)-, alpha-(2-&gt;6)-, alpha-(2-&gt;8)- glycosidic linkages of terminal sialic acid residues in oligosaccharides, glycoproteins, glycolipids, colominic acid and synthetic substrates.. The catalysed reaction is a ganglioside GD1a + H2O = a ganglioside GM1 + N-acetylneuraminate. It catalyses the reaction a ganglioside GM1 + H2O = a ganglioside GA1 + N-acetylneuraminate. The enzyme catalyses a ganglioside GT1b + H2O = a ganglioside GD1b + N-acetylneuraminate. It carries out the reaction a ganglioside GD1b + H2O = a ganglioside GM1 + N-acetylneuraminate. The catalysed reaction is a ganglioside GD3 + H2O = a ganglioside GM3 + N-acetylneuraminate. It catalyses the reaction a ganglioside GM3 + H2O = a beta-D-galactosyl-(1-&gt;4)-beta-D-glucosyl-(1&lt;-&gt;1)-ceramide + N-acetylneuraminate. The enzyme catalyses a ganglioside GM2 + H2O = a ganglioside GA2 + N-acetylneuraminate. It carries out the reaction a neolactoside IV(3)-alpha-NeuAc-nLc4Cer(d18:1(4E)) + H2O = a neolactoside nLc4Cer(d18:1(4E)) + N-acetylneuraminate. The catalysed reaction is N-acetyl-alpha-neuraminosyl-(2-&gt;3)-beta-D-galactosyl-(1-&gt;4)-D-glucose + H2O = lactose + N-acetylneuraminate. Exo-alpha-sialidase that catalyzes the hydrolytic cleavage of the terminal sialic acid (N-acetylneuraminic acid, Neu5Ac) of a glycan moiety in the catabolism of glycolipids, glycoproteins and oligosacharides. Recognizes sialyl linkage positions of the glycan moiety as well as the supramolecular organization of the sialoglycoconjugate. Displays preference for alpha-(2-&gt;3)-sialylated GD1a and GT1B gangliosides over alpha-(2-&gt;8)-sialylated GD1b, in both monomeric forms and micelles. Hydrolyzes exclusively monomeric GM1 ganglioside, but has no activity toward the miscellar form. Has lower sialidase activity for glycoproteins such as fetuin and TF/transferrin that carry a mixture of alpha-(2-&gt;3) and alpha-(2-&gt;6)-sialyl linkages. Cleaves milk oligosaccharide alpha-(2-&gt;3)-sialyllactose, but is inactive toward isomer alpha-(2-&gt;6)-sialyllactose isomer. Has no activity toward colominic acid, a homomer of alpha-(2-&gt;8)-linked Neu5Ac residues. The protein is Sialidase-2 (Neu2) of Mus musculus (Mouse).